A 123-amino-acid polypeptide reads, in one-letter code: NADH dehydrogenase [ubiquinone] 1 beta subcomplex subunit 7 (123 aa).

The interval 1-32 is disordered; that stretch reads MGTKLSVSLEGASTPETAPRVDRPPTFDPQYG. The CHCH domain occupies 59–102; sequence RDYCAHHLISLMKCQTQNAPFAGHACDGERGAWDKCEYDDHIMR. Short sequence motifs (cx9C motif) lie at residues 62–72 and 84–94; these read CAHHLISLMKC and CDGERGAWDKC. Cystine bridges form between Cys62-Cys94 and Cys72-Cys84.

Belongs to the complex I NDUFB7 subunit family. In terms of assembly, complex I is composed of 45 different subunits.

It localises to the mitochondrion. It is found in the mitochondrion inner membrane. The protein resides in the mitochondrion intermembrane space. Functionally, accessory subunit of the mitochondrial membrane respiratory chain NADH dehydrogenase (Complex I), that is believed not to be involved in catalysis. Complex I functions in the transfer of electrons from NADH to the respiratory chain. The immediate electron acceptor for the enzyme is believed to be ubiquinone. The sequence is that of NADH dehydrogenase [ubiquinone] 1 beta subcomplex subunit 7 from Caenorhabditis elegans.